The following is a 175-amino-acid chain: Adenine phosphoribosyltransferase (175 aa).

Belongs to the purine/pyrimidine phosphoribosyltransferase family. Homodimer.

It localises to the cytoplasm. The enzyme catalyses AMP + diphosphate = 5-phospho-alpha-D-ribose 1-diphosphate + adenine. It participates in purine metabolism; AMP biosynthesis via salvage pathway; AMP from adenine: step 1/1. Catalyzes a salvage reaction resulting in the formation of AMP, that is energically less costly than de novo synthesis. This Clavibacter michiganensis subsp. michiganensis (strain NCPPB 382) protein is Adenine phosphoribosyltransferase.